Consider the following 236-residue polypeptide: Probable sulfate/thiosulfate import ATP-binding protein CysA (236 aa).

Residues 3 to 233 enclose the ABC transporter domain; the sequence is ILIENISKRF…PTNTFVTNFL (231 aa). 35-42 serves as a coordination point for ATP; it reads GPSGSGKS.

This sequence belongs to the ABC transporter superfamily. Sulfate/tungstate importer (TC 3.A.1.6) family.

The protein localises to the plastid. The protein resides in the chloroplast. It catalyses the reaction sulfate(out) + ATP + H2O = sulfate(in) + ADP + phosphate + H(+). The catalysed reaction is thiosulfate(out) + ATP + H2O = thiosulfate(in) + ADP + phosphate + H(+). Part of the ABC transporter complex involved in sulfate/thiosulfate import. Responsible for energy coupling to the transport system. The polypeptide is Probable sulfate/thiosulfate import ATP-binding protein CysA (Chlorella vulgaris (Green alga)).